The sequence spans 92 residues: Evasin P675 (92 aa).

Residues 1-24 form the signal peptide; sequence MEVKTFAFLQIAVIIALGLHLAPA. Cystine bridges form between Cys44/Cys63, Cys48/Cys65, and Cys59/Cys76. Residue Asn47 is glycosylated (N-linked (GlcNAc...) asparagine). N-linked (GlcNAc...) asparagine glycosylation occurs at Asn70.

The protein resides in the secreted. Its function is as follows. Salivary chemokine-binding protein which binds to host chemokines CXCL1, CXCL2, CXCL3, CXCL4, CXCL5, CXCL6, CXCL10, CXCL11 and CXCL13. The chain is Evasin P675 from Ixodes ricinus (Common tick).